Consider the following 207-residue polypeptide: Small ribosomal subunit protein uS10m (207 aa).

The N-terminal 14 residues, 1–14 (MNMFRQAVRSFVRY), are a transit peptide targeting the mitochondrion.

The protein belongs to the universal ribosomal protein uS10 family. Part of the mitochondrial small ribosomal subunit.

Its subcellular location is the mitochondrion. Its function is as follows. Involved in mitochondrial genome encoded proteins translation. Involved in the binding of tRNA to the ribosomes. In Kluyveromyces lactis (strain ATCC 8585 / CBS 2359 / DSM 70799 / NBRC 1267 / NRRL Y-1140 / WM37) (Yeast), this protein is Small ribosomal subunit protein uS10m (RSM10).